The following is a 761-amino-acid chain: Neurotrypsin (761 aa).

The signal sequence occupies residues 1 to 21; the sequence is MALARCVLAVILGALSVVARA. The disordered stretch occupies residues 25-87; that stretch reads SRSPLHRPHP…PPTIPRRCGA (63 aa). Over residues 38–48 the composition is skewed to low complexity; the sequence is RSQHAHYLPSS. The Kringle domain maps to 85-157; that stretch reads CGAGESWGNA…GKVDWGYCDC (73 aa). 17 disulfide bridges follow: Cys-85–Cys-157, Cys-101–Cys-141, Cys-130–Cys-155, Cys-191–Cys-255, Cys-204–Cys-265, Cys-235–Cys-245, Cys-298–Cys-361, Cys-311–Cys-371, Cys-341–Cys-351, Cys-411–Cys-475, Cys-424–Cys-485, Cys-455–Cys-465, Cys-505–Cys-636, Cys-547–Cys-563, Cys-651–Cys-717, Cys-680–Cys-694, and Cys-707–Cys-736. Asn-93 carries an N-linked (GlcNAc...) asparagine glycan. 3 SRCR domains span residues 166-267, 273-373, and 386-487; these read IRLV…SCVP, IRLA…TCYP, and IRLV…ICDY. The zymogen activation region stretch occupies residues 505–516; it reads CGLRLLHRRQKR. Residues 517-760 enclose the Peptidase S1 domain; it reads IIGGNNSLRG…FVPWIKSVTS (244 aa). An N-linked (GlcNAc...) asparagine glycan is attached at Asn-521. Residue His-562 is the Charge relay system of the active site. The N-linked (GlcNAc...) asparagine glycan is linked to Asn-569. Catalysis depends on Asp-612, which acts as the Charge relay system. Residue Ser-711 is the Charge relay system of the active site.

Belongs to the peptidase S1 family. Most abundant in cerebral cortex, hippocampus and amygdala.

The protein resides in the secreted. Plays a role in neuronal plasticity and the proteolytic action may subserve structural reorganizations associated with learning and memory operations. This is Neurotrypsin (Prss12) from Mus musculus (Mouse).